Consider the following 309-residue polypeptide: Ribonuclease H2 subunit B (309 aa).

Position 2 is an N-acetylalanine (Ala-2). Lys-295 is modified (N6-acetyllysine). Position 296 is a phosphoserine (Ser-296).

Belongs to the RNase H2 subunit B family. As to quaternary structure, the RNase H2 complex is a heterotrimer composed of the catalytic subunit RNASEH2A and the non-catalytic subunits RNASEH2B and RNASEH2C.

The protein localises to the nucleus. Non catalytic subunit of RNase H2, an endonuclease that specifically degrades the RNA of RNA:DNA hybrids. Participates in DNA replication, possibly by mediating the removal of lagging-strand Okazaki fragment RNA primers during DNA replication. Mediates the excision of single ribonucleotides from DNA:RNA duplexes. This chain is Ribonuclease H2 subunit B (RNASEH2B), found in Bos taurus (Bovine).